The primary structure comprises 396 residues: Stearoyl-[acyl-carrier-protein] 9-desaturase, chloroplastic (396 aa).

Residues methionine 1 to methionine 33 constitute a chloroplast transit peptide. Fe cation-binding residues include glutamate 138, glutamate 176, histidine 179, glutamate 229, glutamate 262, and histidine 265.

This sequence belongs to the fatty acid desaturase type 2 family. In terms of assembly, homodimer. Requires Fe(2+) as cofactor.

The protein localises to the plastid. It localises to the chloroplast. The catalysed reaction is octadecanoyl-[ACP] + 2 reduced [2Fe-2S]-[ferredoxin] + O2 + 2 H(+) = (9Z)-octadecenoyl-[ACP] + 2 oxidized [2Fe-2S]-[ferredoxin] + 2 H2O. It functions in the pathway lipid metabolism; fatty acid metabolism. In terms of biological role, converts stearoyl-ACP to oleoyl-ACP by introduction of a cis double bond between carbons 9 and 10 of the acyl chain. This Helianthus annuus (Common sunflower) protein is Stearoyl-[acyl-carrier-protein] 9-desaturase, chloroplastic.